Reading from the N-terminus, the 359-residue chain is Proton-coupled zinc antiporter SLC30A2 (359 aa).

Topologically, residues 1 to 56 are cytoplasmic; that stretch reads MASRSFFGALWKSEASRIPPVNLPSVELAVQSNHYCHAQKDSGSHPNSEKQRARRK. The Mitochondrial localization signal motif lies at 34 to 37; it reads HYCH. Residue Cys-36 coordinates Zn(2+). Residues 57–77 traverse the membrane as a helical segment; that stretch reads LYVASAICLVFMIGEIIGGYL. The Lumenal segment spans residues 78-86; that stretch reads AQSLAIMTD. The helical transmembrane segment at 87–107 threads the bilayer; sequence AAHLLTDFASMLISLFSLWVS. Residues His-89 and Asp-93 each contribute to the Zn(2+) site. The Cytoplasmic segment spans residues 108–123; that stretch reads SRPATKTMNFGWQRAE. A helical membrane pass occupies residues 124-144; sequence ILGALLSVLSIWVVTGVLVYL. The Lumenal portion of the chain corresponds to 145–159; the sequence is AVQRLISGDYEIKGD. The helical transmembrane segment at 160 to 180 threads the bilayer; it reads TMLITSGCAVAVNIIMGLALH. Residues 181–207 lie on the Cytoplasmic side of the membrane; sequence QSGHGHSHGHSHEDSSQQQQNPSVRAA. A helical membrane pass occupies residues 208 to 228; that stretch reads FIHVVGDLLQSVGVLVAAYII. The Zn(2+) site is built by His-210 and Asp-214. Topologically, residues 229-236 are lumenal; that stretch reads YFKPEYKY. Residues 237 to 257 traverse the membrane as a helical segment; it reads VDPICTFLFSILVLGTTLTIL. Topologically, residues 258-291 are cytoplasmic; that stretch reads RDVILVLMEGTPKGVDFTTVKNLLLSVDGVEALH. The short motif at 281–282 is the Lysosomal targeting motif element; sequence LL. Ser-283 bears the Phosphoserine mark. 3 residues coordinate Zn(2+): His-291, His-308, and Glu-342. A helical membrane pass occupies residues 292–312; it reads SLHIWALTVAQPVLSVHIAIA. The Lumenal portion of the chain corresponds to 313–359; that stretch reads QNVDAQAVLKVARDRLQGKFNFHTMTIQIESYSEDMKSCQECQGPSE.

The protein belongs to the cation diffusion facilitator (CDF) transporter (TC 2.A.4) family. SLC30A subfamily. As to quaternary structure, homodimer. Interacts (via lysosomal targeting motif) with AP3D1; in AP-3-mediated transport to lysosomes. Interacts with TMEM163. Post-translationally, phosphorylated at Ser-283. Phosphorylation at Ser-283 prevents localization to lysosomes. Dephosphorylation of Ser-283 which triggers localization to lysosomes, accumulation of zinc into lysosomes and lysosomal-mediated cell death is induced by TNF-alpha. Detected in intestine, kidney, seminal vesicles and testis.

The protein localises to the cytoplasmic vesicle. Its subcellular location is the secretory vesicle membrane. The protein resides in the zymogen granule membrane. It localises to the endosome membrane. It is found in the lysosome membrane. The protein localises to the mitochondrion inner membrane. It catalyses the reaction Zn(2+)(in) + 2 H(+)(out) = Zn(2+)(out) + 2 H(+)(in). Electroneutral proton-coupled antiporter concentrating zinc ions into a variety of intracellular organelles including endosomes, zymogen granules and mitochondria. Thereby, plays a crucial role in cellular zinc homeostasis to confer upon cells protection against its potential cytotoxicity. Regulates the zinc concentration of milk, through the transport of zinc ions into secretory vesicles of mammary cells. By concentrating zinc ions into lysosomes participates to lysosomal-mediated cell death during early mammary gland involution. The polypeptide is Proton-coupled zinc antiporter SLC30A2 (Rattus norvegicus (Rat)).